Here is a 256-residue protein sequence, read N- to C-terminus: 1-(5-phosphoribosyl)-5-[(5-phosphoribosylamino)methylideneamino] imidazole-4-carboxamide isomerase (256 aa).

Catalysis depends on aspartate 9, which acts as the Proton acceptor. Aspartate 130 (proton donor) is an active-site residue.

The protein belongs to the HisA/HisF family.

The protein localises to the cytoplasm. The enzyme catalyses 1-(5-phospho-beta-D-ribosyl)-5-[(5-phospho-beta-D-ribosylamino)methylideneamino]imidazole-4-carboxamide = 5-[(5-phospho-1-deoxy-D-ribulos-1-ylimino)methylamino]-1-(5-phospho-beta-D-ribosyl)imidazole-4-carboxamide. The protein operates within amino-acid biosynthesis; L-histidine biosynthesis; L-histidine from 5-phospho-alpha-D-ribose 1-diphosphate: step 4/9. The sequence is that of 1-(5-phosphoribosyl)-5-[(5-phosphoribosylamino)methylideneamino] imidazole-4-carboxamide isomerase from Prochlorococcus marinus (strain SARG / CCMP1375 / SS120).